The chain runs to 154 residues: Ribonuclease H (154 aa).

The region spanning 5-146 is the RNase H type-1 domain; it reads EQNIVYLYCD…ADELANRGID (142 aa). Mg(2+)-binding residues include D14, E52, D74, and D138.

Belongs to the RNase H family. In terms of assembly, monomer. Mg(2+) is required as a cofactor.

The protein resides in the cytoplasm. The enzyme catalyses Endonucleolytic cleavage to 5'-phosphomonoester.. Endonuclease that specifically degrades the RNA of RNA-DNA hybrids. This Coxiella burnetii (strain RSA 331 / Henzerling II) protein is Ribonuclease H.